The sequence spans 156 residues: Small ribosomal subunit protein uS7 (156 aa).

Belongs to the universal ribosomal protein uS7 family. Part of the 30S ribosomal subunit. Contacts proteins S9 and S11.

One of the primary rRNA binding proteins, it binds directly to 16S rRNA where it nucleates assembly of the head domain of the 30S subunit. Is located at the subunit interface close to the decoding center, probably blocks exit of the E-site tRNA. In Rhizobium johnstonii (strain DSM 114642 / LMG 32736 / 3841) (Rhizobium leguminosarum bv. viciae), this protein is Small ribosomal subunit protein uS7.